A 197-amino-acid chain; its full sequence is U1 small nuclear ribonucleoprotein C (197 aa).

Residues 4–36 (YYCEYCDIYLTHSSPVGRRQHNQGRKHISAKIE) form a Matrin-type zinc finger. Residues 128–137 (FHNNKRINNI) show a composition bias toward low complexity. Residues 128-178 (FHNNKRINNIPKPYNNYTNKPITNSSYKNDKQDYRNNNESNDNMNSNNFSN) form a disordered region. A compositionally biased stretch (polar residues) spans 142 to 154 (NNYTNKPITNSSY). A compositionally biased stretch (low complexity) spans 164–178 (NNESNDNMNSNNFSN).

The protein belongs to the U1 small nuclear ribonucleoprotein C family. As to quaternary structure, U1 snRNP is composed of the 7 core Sm proteins B/B', D1, D2, D3, E, F and G that assemble in a heptameric protein ring on the Sm site of the small nuclear RNA to form the core snRNP, and at least 3 U1 snRNP-specific proteins U1-70K, U1-A and U1-C. U1-C interacts with U1 snRNA and the 5' splice-site region of the pre-mRNA.

It localises to the nucleus. Functionally, component of the spliceosomal U1 snRNP, which is essential for recognition of the pre-mRNA 5' splice-site and the subsequent assembly of the spliceosome. U1-C is directly involved in initial 5' splice-site recognition for both constitutive and regulated alternative splicing. The interaction with the 5' splice-site seems to precede base-pairing between the pre-mRNA and the U1 snRNA. Stimulates commitment or early (E) complex formation by stabilizing the base pairing of the 5' end of the U1 snRNA and the 5' splice-site region. The protein is U1 small nuclear ribonucleoprotein C (SNRPC) of Plasmodium berghei (strain Anka).